We begin with the raw amino-acid sequence, 94 residues long: Ribonuclease P protein component 1 (94 aa).

It belongs to the eukaryotic/archaeal RNase P protein component 1 family. As to quaternary structure, consists of a catalytic RNA component and at least 4-5 protein subunits.

It localises to the cytoplasm. It catalyses the reaction Endonucleolytic cleavage of RNA, removing 5'-extranucleotides from tRNA precursor.. Its function is as follows. Part of ribonuclease P, a protein complex that generates mature tRNA molecules by cleaving their 5'-ends. The polypeptide is Ribonuclease P protein component 1 (Thermofilum pendens (strain DSM 2475 / Hrk 5)).